We begin with the raw amino-acid sequence, 160 residues long: Major pollen allergen Bet v 1-F/I (160 aa).

The brassinolide site is built by lysine 55, tyrosine 82, tyrosine 84, and asparagine 101.

This sequence belongs to the BetVI family.

The protein localises to the cytoplasm. Functionally, may be a general steroid carrier protein. The chain is Major pollen allergen Bet v 1-F/I (BETV1F) from Betula pendula (European white birch).